Here is a 347-residue protein sequence, read N- to C-terminus: Mediator of RNA polymerase II transcription subunit 7 (347 aa).

Disordered regions lie at residues Gly-97 to His-172 and Val-302 to Glu-326. Composition is skewed to low complexity over residues Ser-108–Thr-171 and Val-302–Val-312.

This sequence belongs to the Mediator complex subunit 7 family. As to quaternary structure, component of the Mediator complex.

It is found in the nucleus. Its function is as follows. Component of the Mediator complex, a coactivator involved in the regulated transcription of nearly all RNA polymerase II-dependent genes. Mediator functions as a bridge to convey information from gene-specific regulatory proteins to the basal RNA polymerase II transcription machinery. Mediator is recruited to promoters by direct interactions with regulatory proteins and serves as a scaffold for the assembly of a functional preinitiation complex with RNA polymerase II and the general transcription factors. The sequence is that of Mediator of RNA polymerase II transcription subunit 7 (med-7) from Neurospora crassa (strain ATCC 24698 / 74-OR23-1A / CBS 708.71 / DSM 1257 / FGSC 987).